A 276-amino-acid chain; its full sequence is Octanoyltransferase LipM (276 aa).

Residues 31–246 (GKVPPTVRFY…GFASGLEVEL (216 aa)) form the BPL/LPL catalytic domain. Cys148 serves as the catalytic Acyl-thioester intermediate.

This sequence belongs to the octanoyltransferase LipM family. As to quaternary structure, monomer.

It carries out the reaction octanoyl-[ACP] + L-lysyl-[protein] = N(6)-octanoyl-L-lysyl-[protein] + holo-[ACP] + H(+). The protein operates within protein modification; protein lipoylation via endogenous pathway; protein N(6)-(lipoyl)lysine from octanoyl-[acyl-carrier-protein]. Catalyzes the transfer of endogenously produced octanoic acid from octanoyl-acyl-carrier-protein onto the lipoyl domain of GcvH, an intermediate carrier during protein lipoylation. The sequence is that of Octanoyltransferase LipM from Brevibacillus brevis (strain 47 / JCM 6285 / NBRC 100599).